A 261-amino-acid polypeptide reads, in one-letter code: Single-strand annealing weakened protein 1 (261 aa).

Interacts with MSH2, MSH3, RAD1, RAD10, RAD51 and RAD52.

The protein resides in the nucleus. Catalyzes 3'-non-homologous tail removal of RAD1/RAD10-dependent single-strand annealing recombination intermediates. Plays a key role in targeting RAD1/RAD10 complex to 3'-flap cleavage substrate in recombination. Also contributes to the integrity of ribosomal DNA arrays. The protein is Single-strand annealing weakened protein 1 (SAW1) of Saccharomyces cerevisiae (strain ATCC 204508 / S288c) (Baker's yeast).